A 239-amino-acid chain; its full sequence is Interleukin-27 subunit alpha (239 aa).

An N-terminal signal peptide occupies residues 1–28 (MGQMADDLGWRLSLLLLSLLLARAGVWG). N-linked (GlcNAc...) asparagine glycosylation occurs at Asn-89. The tract at residues 167–186 (EEENEAGRELLPGAPGGPSK) is disordered.

This sequence belongs to the IL-6 superfamily. In terms of assembly, heterodimer with EBI3; not disulfide-linked. This heterodimer is known as interleukin IL-27. Post-translationally, O-glycosylated.

The protein localises to the secreted. Associates with EBI3 to form the IL-27 interleukin, a heterodimeric cytokine which functions in innate immunity. Cytokine with pro- and anti-inflammatory properties, that can regulate T-helper cell development, suppress T-cell proliferation, stimulate cytotoxic T-cell activity, induce isotype switching in B-cells, and that has diverse effects on innate immune cells. Among its target cells are CD4 T-helper cells which can differentiate in type 1 effector cells (TH1), type 2 effector cells (TH2) and IL17 producing helper T-cells (TH17). It drives rapid clonal expansion of naive but not memory CD4 T-cells. It also strongly synergizes with IL-12 to trigger interferon-gamma/IFN-gamma production of naive CD4 T-cells, binds to the cytokine receptor WSX-1/TCCR which appears to be required but not sufficient for IL-27-mediated signal transduction. IL-27 potentiate the early phase of TH1 response and suppress TH2 and TH17 differentiation. It induces the differentiation of TH1 cells via two distinct pathways, p38 MAPK/TBX21- and ICAM1/ITGAL/ERK-dependent pathways. It also induces STAT1, STAT3, STAT4 and STAT5 phosphorylation and activates TBX21/T-Bet via STAT1 with resulting IL12RB2 up-regulation, an event crucial to TH1 cell commitment. It suppresses the expression of GATA3, the inhibitor TH1 cells development. In CD8 T-cells, it activates STATs as well as GZMB. IL-27 reveals to be a potent inhibitor of TH17 cell development and of IL-17 production. Indeed IL27 alone is also able to inhibit the production of IL17 by CD4 and CD8 T-cells. While IL-27 suppressed the development of pro-inflammatory Th17 cells via STAT1, it inhibits the development of anti-inflammatory inducible regulatory T-cells, iTreg, independently of STAT1. IL-27 also has an effect on cytokine production, it suppresses pro-inflammatory cytokine production such as IL2, IL4, IL5 and IL6 and activates suppressors of cytokine signaling such as SOCS1 and SOCS3. Apart from suppression of cytokine production, IL-27 also antagonizes the effects of some cytokines such as IL6 through direct effects on T-cells. Another important role of IL-27 is its antitumor activity as well as its antiangiogenic activity with activation of production of antiangiogenic chemokines such as IP-10/CXCL10 and MIG/CXCL9. In vein endothelial cells, it induces IRF1/interferon regulatory factor 1 and increase the expression of MHC class II transactivator/CIITA with resulting up-regulation of major histocompatibility complex class II. This is Interleukin-27 subunit alpha (IL27) from Sus scrofa (Pig).